We begin with the raw amino-acid sequence, 184 residues long: Casparian strip membrane protein 3 (184 aa).

Residues 1 to 24 (MEGSEEHGETSKAPLSRGVSKGVS) lie on the Cytoplasmic side of the membrane. The helical transmembrane segment at 25 to 45 (ILDVILRFVAIIGTLASAIAM) threads the bilayer. Over 46 to 72 (GTTNQTLPFFTQFIRFKAQYSDLPTLT) the chain is Extracellular. Residue Asn-49 is glycosylated (N-linked (GlcNAc...) asparagine). The chain crosses the membrane as a helical span at residues 73–93 (FFVVANSIVSAYLILSLPLSI). The Cytoplasmic segment spans residues 94 to 105 (VHVIRSRAKYSR). Residues 106-126 (LILIFFDAAMLALVTAGASAA) traverse the membrane as a helical segment. The Extracellular segment spans residues 127 to 159 (AAIVYLAHKGNARANWLAICQQFDSFCERISGS). A helical transmembrane segment spans residues 160 to 180 (LIGSFAAMVVLVLLIFLSAIA). Over 181-184 (LARR) the chain is Cytoplasmic.

It belongs to the Casparian strip membrane proteins (CASP) family. As to quaternary structure, homodimer and heterodimers.

Its subcellular location is the cell membrane. Its function is as follows. Regulates membrane-cell wall junctions and localized cell wall deposition. Required for establishment of the Casparian strip membrane domain (CSD) and the subsequent formation of Casparian strips, a cell wall modification of the root endodermis that determines an apoplastic barrier between the intraorganismal apoplasm and the extraorganismal apoplasm and prevents lateral diffusion. The polypeptide is Casparian strip membrane protein 3 (Oryza sativa subsp. indica (Rice)).